A 313-amino-acid chain; its full sequence is MIGRHKHCIALEDFSREEILEVIDLAASMKEVLQRPIKKVPSLRGKMVVNLFFEASTRTRSSFETAAKILSADALNWTSSSSSVTKGETLVDTARNLEAMRPDVLVIRHSAGGAPRLVAEHVGCSVVSAGDGAHEHPSQGLLDCFTLREKLGTLEGKTVAIVGDVSHSRVARSDLHAFPKLGAKVRLCGPPTMMPAGVERLGATVHTDLREAVDGADAVIMLRIQHERIGDPLIPGTREYSKVWGLNAKKAADWLKPSCVILHPGPINRGVELSPEVADGPRSVILDQVQNGVAVRMAILYLLAGGAGEEARA.

2 residues coordinate carbamoyl phosphate: Arg-58 and Thr-59. Lys-86 serves as a coordination point for L-aspartate. Residues Arg-108, His-136, and Gln-139 each contribute to the carbamoyl phosphate site. 2 residues coordinate L-aspartate: Arg-169 and Arg-223. Residues Gly-265 and Pro-266 each contribute to the carbamoyl phosphate site.

The protein belongs to the aspartate/ornithine carbamoyltransferase superfamily. ATCase family. Heterododecamer (2C3:3R2) of six catalytic PyrB chains organized as two trimers (C3), and six regulatory PyrI chains organized as three dimers (R2).

The catalysed reaction is carbamoyl phosphate + L-aspartate = N-carbamoyl-L-aspartate + phosphate + H(+). It participates in pyrimidine metabolism; UMP biosynthesis via de novo pathway; (S)-dihydroorotate from bicarbonate: step 2/3. Functionally, catalyzes the condensation of carbamoyl phosphate and aspartate to form carbamoyl aspartate and inorganic phosphate, the committed step in the de novo pyrimidine nucleotide biosynthesis pathway. The chain is Aspartate carbamoyltransferase catalytic subunit from Anaeromyxobacter sp. (strain K).